Here is a 130-residue protein sequence, read N- to C-terminus: Small ribosomal subunit protein uS8 (130 aa).

The protein belongs to the universal ribosomal protein uS8 family. In terms of assembly, part of the 30S ribosomal subunit. Contacts proteins S5 and S12.

Its function is as follows. One of the primary rRNA binding proteins, it binds directly to 16S rRNA central domain where it helps coordinate assembly of the platform of the 30S subunit. This Vibrio cholerae serotype O1 (strain ATCC 39541 / Classical Ogawa 395 / O395) protein is Small ribosomal subunit protein uS8.